The chain runs to 315 residues: WD repeat domain-containing protein 83 (315 aa).

WD repeat units lie at residues cysteine 23–threonine 62, glycine 65–lysine 104, glycine 107–isoleucine 146, glutamate 151–aspartate 188, tyrosine 189–glutamate 228, valine 233–lysine 272, and valine 275–asparagine 313.

It belongs to the WD repeat MORG1 family.

The protein localises to the cytoplasm. Its function is as follows. Molecular scaffold protein for various multimeric protein complexes. Acts as a module in the assembly of a multicomponent scaffold for the ERK pathway, linking ERK responses to specific agonists. Also involved in response to hypoxia by acting as a negative regulator of HIF1A/HIF-1-alpha. The protein is WD repeat domain-containing protein 83 (wdr83) of Danio rerio (Zebrafish).